Reading from the N-terminus, the 113-residue chain is Cytochrome c2 (113 aa).

Heme c is bound by residues Cys-15, Cys-18, His-19, and Met-92.

The protein belongs to the cytochrome c family. Binds 1 heme c group covalently per subunit.

In terms of biological role, cytochrome c2 is found mainly in purple, non-sulfur, photosynthetic bacteria where it functions as the electron donor to the oxidized bacteriochlorophyll in the photophosphorylation pathway. However, it may also have a role in the respiratory chain and is found in some non-photosynthetic bacteria. The protein is Cytochrome c2 of Pararhodospirillum photometricum (Rhodospirillum photometricum).